The primary structure comprises 182 residues: ATP synthase subunit delta (182 aa).

This sequence belongs to the ATPase delta chain family. In terms of assembly, F-type ATPases have 2 components, F(1) - the catalytic core - and F(0) - the membrane proton channel. F(1) has five subunits: alpha(3), beta(3), gamma(1), delta(1), epsilon(1). F(0) has three main subunits: a(1), b(2) and c(10-14). The alpha and beta chains form an alternating ring which encloses part of the gamma chain. F(1) is attached to F(0) by a central stalk formed by the gamma and epsilon chains, while a peripheral stalk is formed by the delta and b chains.

It is found in the cell inner membrane. Its function is as follows. F(1)F(0) ATP synthase produces ATP from ADP in the presence of a proton or sodium gradient. F-type ATPases consist of two structural domains, F(1) containing the extramembraneous catalytic core and F(0) containing the membrane proton channel, linked together by a central stalk and a peripheral stalk. During catalysis, ATP synthesis in the catalytic domain of F(1) is coupled via a rotary mechanism of the central stalk subunits to proton translocation. In terms of biological role, this protein is part of the stalk that links CF(0) to CF(1). It either transmits conformational changes from CF(0) to CF(1) or is implicated in proton conduction. This Persephonella marina (strain DSM 14350 / EX-H1) protein is ATP synthase subunit delta.